We begin with the raw amino-acid sequence, 234 residues long: Leucyl/phenylalanyl-tRNA--protein transferase (234 aa).

The protein belongs to the L/F-transferase family.

It localises to the cytoplasm. The catalysed reaction is N-terminal L-lysyl-[protein] + L-leucyl-tRNA(Leu) = N-terminal L-leucyl-L-lysyl-[protein] + tRNA(Leu) + H(+). It catalyses the reaction N-terminal L-arginyl-[protein] + L-leucyl-tRNA(Leu) = N-terminal L-leucyl-L-arginyl-[protein] + tRNA(Leu) + H(+). It carries out the reaction L-phenylalanyl-tRNA(Phe) + an N-terminal L-alpha-aminoacyl-[protein] = an N-terminal L-phenylalanyl-L-alpha-aminoacyl-[protein] + tRNA(Phe). In terms of biological role, functions in the N-end rule pathway of protein degradation where it conjugates Leu, Phe and, less efficiently, Met from aminoacyl-tRNAs to the N-termini of proteins containing an N-terminal arginine or lysine. This is Leucyl/phenylalanyl-tRNA--protein transferase from Dechloromonas aromatica (strain RCB).